A 203-amino-acid polypeptide reads, in one-letter code: MRLFVGLGNPGSRYAGNRHNIGFMALDAIARRHRAAPWRRKFQGEASEAVLGSERVLLLKPETYMNESGRAVAEAQRFYKIALDDVVVFHDELDLGPTKVRVKRGGGNAGHNGLRSITALCGNEYWRVRLGIGHPGDKALVHAYVLNDFAKAERPWVDDLCDALADHAALLAAGEDAAFQNKVHLALQGRGWDDVRRVGDKQA.

Tyr14 contributes to the tRNA binding site. His19 acts as the Proton acceptor in catalysis. Residues Tyr64, Asn66, and Asn112 each contribute to the tRNA site.

It belongs to the PTH family. In terms of assembly, monomer.

It localises to the cytoplasm. It catalyses the reaction an N-acyl-L-alpha-aminoacyl-tRNA + H2O = an N-acyl-L-amino acid + a tRNA + H(+). Its function is as follows. Hydrolyzes ribosome-free peptidyl-tRNAs (with 1 or more amino acids incorporated), which drop off the ribosome during protein synthesis, or as a result of ribosome stalling. In terms of biological role, catalyzes the release of premature peptidyl moieties from peptidyl-tRNA molecules trapped in stalled 50S ribosomal subunits, and thus maintains levels of free tRNAs and 50S ribosomes. This is Peptidyl-tRNA hydrolase from Methylobacterium nodulans (strain LMG 21967 / CNCM I-2342 / ORS 2060).